The primary structure comprises 387 residues: MMELESETQELHLHVNGEPEGKFSTEERSHKYSWRLRVSLYVTLLLAGETIATLLGRLYYEKGGKSTWLETLVQLVGFPLTLPCYYYLKPEPSKTKTITKKTTSSFLTLSLVYIGLGLLVAGHCILYSFGLLYLPVSTFSLISASQLAFNAVFSYFLNSQKITPFILNSLVLLTISSTLLVIQHEPESPSSTSKSAAKSKYVIGYICAVGSSAGYSLVLSLTDYAFEKILKKYTFKAILDMATYPSMVATCVVVVGLFGSGGWKKLSTEMEEFQLGKSSYILINIGSTISWQACLIGSVGLIIEVSSLFSNVISTLCLPVVPVLAVVFFRDEMSGIKLVAMFLAIWGFVSYGYQHYVNDRKPEEDQELPQSKEEEEQKQVDTIHVQA.

The tract at residues 1–24 (MMELESETQELHLHVNGEPEGKFS) is disordered. Residues 9–24 (QELHLHVNGEPEGKFS) show a composition bias toward basic and acidic residues. Helical transmembrane passes span 36 to 56 (LRVSLYVTLLLAGETIATLLG), 68 to 88 (WLETLVQLVGFPLTLPCYYYL), 106 to 126 (FLTLSLVYIGLGLLVAGHCIL), 129 to 149 (FGLLYLPVSTFSLISASQLAF), 162 to 182 (ITPFILNSLVLLTISSTLLVI), 201 to 221 (YVIGYICAVGSSAGYSLVLSL), 238 to 258 (ILDMATYPSMVATCVVVVGLF), 283 to 303 (INIGSTISWQACLIGSVGLII), 309 to 329 (FSNVISTLCLPVVPVLAVVFF), and 333 to 353 (MSGIKLVAMFLAIWGFVSYGY). The interval 362–387 (PEEDQELPQSKEEEEQKQVDTIHVQA) is disordered. Residues 370-381 (QSKEEEEQKQVD) show a composition bias toward basic and acidic residues.

It belongs to the purine permeases (TC 2.A.7.14) family.

The protein localises to the membrane. In Arabidopsis thaliana (Mouse-ear cress), this protein is Probable purine permease 6 (PUP6).